The primary structure comprises 330 residues: Free fatty acid receptor 2 (330 aa).

The Extracellular portion of the chain corresponds to 1–8; it reads MTPDWHSS. The helical transmembrane segment at 9 to 29 threads the bilayer; the sequence is LILTAYILIFLTGLPANLLAL. Over 30-43 the chain is Cytoplasmic; the sequence is RAFVSRVRQPQPAP. Residues 44–64 traverse the membrane as a helical segment; that stretch reads VHILLLNLTLADLLLLLLLPF. Residues 65-79 lie on the Extracellular side of the membrane; the sequence is RIVEAASNFRWYLPK. A helical membrane pass occupies residues 80–100; sequence IVCALTGFGFYSSIYCSTWLL. Residues 101–126 lie on the Cytoplasmic side of the membrane; sequence AGISIERYLGVAFPVQYKLSRRPLYG. Residues 127 to 147 form a helical membrane-spanning segment; that stretch reads VIAALVAWIMSFGHCTIVIIV. At 148-184 the chain is on the extracellular side; it reads QYLNSTEQVGTENQITCYENFTQAQLDVVLPVRLELC. N-linked (GlcNAc...) asparagine glycosylation is found at N151 and N167. The chain crosses the membrane as a helical span at residues 185-205; sequence LVLFFVPMTVTIFCYWRFVWI. The Cytoplasmic segment spans residues 206–219; it reads MLTQPHVGAQRRRR. Residues 220–240 traverse the membrane as a helical segment; it reads AVGLAVVTLLNFLVCFGPYNM. At 241–255 the chain is on the extracellular side; sequence SHLVGFHLRQSPSWR. The helical transmembrane segment at 256–276 threads the bilayer; sequence VEAVVFSSLNASLDPLLFYFS. Residues 277-330 are Cytoplasmic-facing; it reads SSVVRRAFGKGLLLLRNPGSSMLGRGAEETVEGTKTDRGGSQTEGAQSSDFVTE. The interval 300–330 is disordered; that stretch reads GRGAEETVEGTKTDRGGSQTEGAQSSDFVTE. Basic and acidic residues predominate over residues 302-314; it reads GAEETVEGTKTDR. The segment covering 315-330 has biased composition (polar residues); sequence GGSQTEGAQSSDFVTE.

Belongs to the G-protein coupled receptor 1 family. In terms of assembly, interacts with FCN1 (via Fibrinogen C-terminal domain). As to expression, detected in whole wall and separated mucosa in the distal ileum and colon. Expressed by enteroendocrine cells expressing peptide YY (PYY) (at protein level).

Its subcellular location is the cell membrane. In terms of biological role, g protein-coupled receptor that is activated by a major product of dietary fiber digestion, the short chain fatty acids (SCFAs), and that plays a role in the regulation of whole-body energy homeostasis and in intestinal immunity. In omnivorous mammals, the short chain fatty acids acetate, propionate and butyrate are produced primarily by the gut microbiome that metabolizes dietary fibers. SCFAs serve as a source of energy but also act as signaling molecules. That G protein-coupled receptor is probably coupled to the pertussis toxin-sensitive, G(i/o)-alpha family of G proteins but also to the Gq family. Its activation results in the formation of inositol 1,4,5-trisphosphate, the mobilization of intracellular calcium, the phosphorylation of the MAPK3/ERK1 and MAPK1/ERK2 kinases and the inhibition of intracellular cAMP accumulation. May play a role in glucose homeostasis by regulating the secretion of GLP-1, in response to short-chain fatty acids accumulating in the intestine. May also regulate the production of LEP/Leptin, a hormone acting on the central nervous system to inhibit food intake. Finally, may also regulate whole-body energy homeostasis through adipogenesis regulating both differentiation and lipid storage of adipocytes. In parallel to its role in energy homeostasis, may also mediate the activation of the inflammatory and immune responses by SCFA in the intestine, regulating the rapid production of chemokines and cytokines. May also play a role in the resolution of the inflammatory response and control chemotaxis in neutrophils. In addition to SCFAs, may also be activated by the extracellular lectin FCN1 in a process leading to activation of monocytes and inducing the secretion of interleukin-8/IL-8 in response to the presence of microbes. The chain is Free fatty acid receptor 2 (Ffar2) from Rattus norvegicus (Rat).